Here is a 65-residue protein sequence, read N- to C-terminus: Large ribosomal subunit protein uL30 (65 aa).

This sequence belongs to the universal ribosomal protein uL30 family. Part of the 50S ribosomal subunit.

This chain is Large ribosomal subunit protein uL30, found in Mycobacterium bovis (strain ATCC BAA-935 / AF2122/97).